A 172-amino-acid polypeptide reads, in one-letter code: Single-stranded DNA-binding protein A (172 aa).

The SSB domain maps to 1 to 104 (MLNRVVLVGR…VQAESVQFLE (104 aa)). The residue at position 82 (Tyr82) is a Phosphotyrosine. Residues 103–172 (LEPKNGGGSG…IDISDDDLPF (70 aa)) are disordered. Over residues 107 to 131 (NGGGSGSGGYNEGNSGGGQYFGGGQ) the composition is skewed to gly residues. The segment covering 132-149 (NDNPFGGNQNNQRRNQGN) has biased composition (low complexity). The short motif at 167-172 (DDDLPF) is the Important for interaction with partner proteins element.

As to quaternary structure, homotetramer. Interacts with proteins involved in DNA metabolism such as PriA, RecQ, RecG, RecS, DnaE, RarA, RecJ, RecO, SbcC, RecD2 (formerly YrrC), XseA and Ung. Interacts with RecQ via its 10 C-terminal residues. Interacts with RecD2. Phosphorylated by YwqD, which increases ssDNA affinity; dephosphorylated by YwqE.

The protein localises to the cytoplasm. Its subcellular location is the nucleoid. Its function is as follows. Plays an important role in DNA replication, recombination and repair. Binds to single-stranded (ss)DNA and to an array of partner proteins to recruit them to their sites of action during DNA metabolism. Associates with oriC, this requires DnaA. SsbA binding to ssDNA prevents DnaB and DnaD individually from binding to DNA. Has a 20-fold higher affinity for ssDNA than SsbB; SsbA and DprA activate the homologous DNA strand exchange function of RecA-ATP. Enhances the activity of 3'-5' DNA helicase RecQ. This chain is Single-stranded DNA-binding protein A (ssbA), found in Bacillus subtilis (strain 168).